Consider the following 1149-residue polypeptide: Nitric oxide synthase, inducible (1149 aa).

Positions 22–83 (KDINNNVGKA…HKPSPTCSQH (62 aa)) are disordered. A DINNN-motif; mediates interaction with SPSB1, SPSB2 and SPSB4 motif is present at residues 23 to 27 (DINNN). Over residues 50–61 (KHQNGSSQSLTG) the composition is skewed to polar residues. Positions 109 and 114 each coordinate Zn(2+). Residue S117 coordinates (6R)-L-erythro-5,6,7,8-tetrahydrobiopterin. Heme b is bound at residue C199. L-arginine-binding residues include Q262, W371, Y372, and E376. (6R)-L-erythro-5,6,7,8-tetrahydrobiopterin contacts are provided by R380, I461, W462, and F475. Heme b is bound at residue Y490. The interval 514–534 (FRVLAKATLFASLLMRKMMAS) is calmodulin-binding. One can recognise a Flavodoxin-like domain in the interval 538 to 676 (ATILFATETG…AFCTWAVQTF (139 aa)). T544, E545, T546, K548, and S549 together coordinate FMN. Residue Y574 is modified to Phosphotyrosine. 7 residues coordinate FMN: S590, T591, S627, R632, C634, E660, and Q664. Residues 729-969 (TDVFTMRLKS…VRSVNSFQLP (241 aa)) form the FAD-binding FR-type domain. NADP(+) is bound at residue R749. The FAD site is built by H771, R905, Y907, S908, T923, and A925. An NADP(+)-binding site is contributed by T928. Y929, V942, C943, and S944 together coordinate FAD. Residues T983, R1016, S1045, R1046, K1052, Y1054, Q1056, and D1089 each coordinate NADP(+).

This sequence belongs to the NOS family. As to quaternary structure, homodimer. Interacts with NHERF1. Interacts with GAPDH; induced by oxidatively-modified low-densitity lipoprotein (LDL(ox)). Interacts with S100A8 and S100A9 to form the iNOS-S100A8/9 transnitrosylase complex. Interacts with SPSB1, SPSB2 and SPSB4. Interacts with ELOC and CUL5 in the presence of SPSB1 or SPSB2 or SPSB4. Forms a complex with ASL, ASS1 and HSP90AA1; the complex regulates cell-autonomous L-arginine synthesis and citrulline recycling while channeling extracellular L-arginine to nitric oxide synthesis pathway. The cofactor is heme b. FAD is required as a cofactor. It depends on FMN as a cofactor. Requires (6R)-L-erythro-5,6,7,8-tetrahydrobiopterin as cofactor. Post-translationally, polyubiquitinated; mediated by SPSB1, SPSB2 and SPSB4, leading to proteasomal degradation. In terms of tissue distribution, expressed in the lung and colon. Not detected in the heart, aorta, liver, kidney, and spleen.

The protein resides in the cytoplasm. The protein localises to the cytosol. It carries out the reaction 2 L-arginine + 3 NADPH + 4 O2 + H(+) = 2 L-citrulline + 2 nitric oxide + 3 NADP(+) + 4 H2O. Regulated by calcium/calmodulin. In terms of biological role, produces nitric oxide (NO) which is a messenger molecule with diverse functions throughout the body. In macrophages, NO mediates tumoricidal and bactericidal actions. Also has nitrosylase activity and mediates cysteine S-nitrosylation of cytoplasmic target proteins such PTGS2/COX2. As component of the iNOS-S100A8/9 transnitrosylase complex involved in the selective inflammatory stimulus-dependent S-nitrosylation of GAPDH implicated in regulation of the GAIT complex activity and probably multiple targets including ANXA5, EZR, MSN and VIM. Involved in inflammation, enhances the synthesis of pro-inflammatory mediators such as IL6 and IL8. The chain is Nitric oxide synthase, inducible (NOS2) from Cavia porcellus (Guinea pig).